The sequence spans 79 residues: Pulmonary surfactant-associated protein B (79 aa).

A Saposin B-type domain is found at 4-79; it reads PLPFCWLCRT…VCGLVLRCSS (76 aa). 3 cysteine pairs are disulfide-bonded: Cys8–Cys77, Cys11–Cys71, and Cys35–Cys46.

Homodimer; disulfide-linked.

Its subcellular location is the secreted. The protein localises to the extracellular space. The protein resides in the surface film. Functionally, pulmonary surfactant-associated proteins promote alveolar stability by lowering the surface tension at the air-liquid interface in the peripheral air spaces. SP-B increases the collapse pressure of palmitic acid to nearly 70 millinewtons per meter. The protein is Pulmonary surfactant-associated protein B (SFTPB) of Sus scrofa (Pig).